The chain runs to 424 residues: Serine--tRNA ligase (424 aa).

Residue T231–E233 participates in L-serine binding. Position 262–264 (R262–E264) interacts with ATP. E285 is an L-serine binding site. Position 349 to 352 (E349 to S352) interacts with ATP. S385 is a binding site for L-serine.

This sequence belongs to the class-II aminoacyl-tRNA synthetase family. Type-1 seryl-tRNA synthetase subfamily. In terms of assembly, homodimer. The tRNA molecule binds across the dimer.

It is found in the cytoplasm. It carries out the reaction tRNA(Ser) + L-serine + ATP = L-seryl-tRNA(Ser) + AMP + diphosphate + H(+). It catalyses the reaction tRNA(Sec) + L-serine + ATP = L-seryl-tRNA(Sec) + AMP + diphosphate + H(+). It participates in aminoacyl-tRNA biosynthesis; selenocysteinyl-tRNA(Sec) biosynthesis; L-seryl-tRNA(Sec) from L-serine and tRNA(Sec): step 1/1. Catalyzes the attachment of serine to tRNA(Ser). Is also able to aminoacylate tRNA(Sec) with serine, to form the misacylated tRNA L-seryl-tRNA(Sec), which will be further converted into selenocysteinyl-tRNA(Sec). The protein is Serine--tRNA ligase of Bacillus pumilus (strain SAFR-032).